Consider the following 257-residue polypeptide: Urease accessory protein UreD 3 (257 aa).

Positions Met1–Pro22 are disordered.

It belongs to the UreD family. As to quaternary structure, ureD, UreF and UreG form a complex that acts as a GTP-hydrolysis-dependent molecular chaperone, activating the urease apoprotein by helping to assemble the nickel containing metallocenter of UreC. The UreE protein probably delivers the nickel.

The protein localises to the cytoplasm. Required for maturation of urease via the functional incorporation of the urease nickel metallocenter. This Streptomyces griseus subsp. griseus (strain JCM 4626 / CBS 651.72 / NBRC 13350 / KCC S-0626 / ISP 5235) protein is Urease accessory protein UreD 3.